The chain runs to 253 residues: Imidazole glycerol phosphate synthase subunit HisF (253 aa).

Residues D11 and D130 contribute to the active site.

The protein belongs to the HisA/HisF family. As to quaternary structure, heterodimer of HisH and HisF.

It is found in the cytoplasm. The enzyme catalyses 5-[(5-phospho-1-deoxy-D-ribulos-1-ylimino)methylamino]-1-(5-phospho-beta-D-ribosyl)imidazole-4-carboxamide + L-glutamine = D-erythro-1-(imidazol-4-yl)glycerol 3-phosphate + 5-amino-1-(5-phospho-beta-D-ribosyl)imidazole-4-carboxamide + L-glutamate + H(+). Its pathway is amino-acid biosynthesis; L-histidine biosynthesis; L-histidine from 5-phospho-alpha-D-ribose 1-diphosphate: step 5/9. IGPS catalyzes the conversion of PRFAR and glutamine to IGP, AICAR and glutamate. The HisF subunit catalyzes the cyclization activity that produces IGP and AICAR from PRFAR using the ammonia provided by the HisH subunit. The sequence is that of Imidazole glycerol phosphate synthase subunit HisF from Dehalococcoides mccartyi (strain ATCC BAA-2100 / JCM 16839 / KCTC 5957 / BAV1).